Reading from the N-terminus, the 189-residue chain is Potassium-transporting ATPase KdpC subunit (189 aa).

A helical membrane pass occupies residues Leu8–Gly28.

It belongs to the KdpC family. In terms of assembly, the system is composed of three essential subunits: KdpA, KdpB and KdpC.

It is found in the cell inner membrane. In terms of biological role, part of the high-affinity ATP-driven potassium transport (or Kdp) system, which catalyzes the hydrolysis of ATP coupled with the electrogenic transport of potassium into the cytoplasm. This subunit acts as a catalytic chaperone that increases the ATP-binding affinity of the ATP-hydrolyzing subunit KdpB by the formation of a transient KdpB/KdpC/ATP ternary complex. This is Potassium-transporting ATPase KdpC subunit from Serratia proteamaculans (strain 568).